The sequence spans 1041 residues: Sodium/potassium-transporting ATPase subunit alpha (1041 aa).

4 helical membrane-spanning segments follow: residues 115 to 135, 147 to 167, 312 to 332, and 338 to 358; these read FGGFAMLLWIGAILCFVAYSI, NLYLGIVLSAVVIVTGIFSYY, LITGVAVFLGVTFFVIAFILG, and AVIFLIGIIVANVPEGLLATV. Catalysis depends on Asp394, which acts as the 4-aspartylphosphate intermediate. Lys526 is a binding site for ATP. The next 4 helical transmembrane spans lie at 808–828, 870–890, 935–955, and 970–990; these read FLAFILCDIPLPLGTVTILCI, MAYGQIGMIQAAAGFFVYFVI, TCHTAFFISIVVVQWADLIIC, and WALNFGLVFETVLAAFLSYCP.

The protein belongs to the cation transport ATPase (P-type) (TC 3.A.3) family. Type IIC subfamily. As to quaternary structure, the sodium/potassium-transporting ATPase is composed of a catalytic alpha subunit, an auxiliary non-catalytic beta subunit and an additional regulatory subunit. High levels are found in some adult tissues: Malpighian tubules, indirect flight muscles, tubular leg muscles and throughout the nervous system (brain, optic lobes, retina and ventral thoracic neuromere). Lower levels are detected at the posterior end where the reproductive organs and rectum are located.

Its subcellular location is the cell membrane. The catalysed reaction is K(+)(out) + Na(+)(in) + ATP + H2O = K(+)(in) + Na(+)(out) + ADP + phosphate + H(+). Its function is as follows. This is the catalytic component of the active enzyme, which catalyzes the hydrolysis of ATP coupled with the exchange of sodium and potassium ions across the plasma membrane. This action creates the electrochemical gradient of sodium and potassium ions, providing the energy for active transport of various nutrients. The sequence is that of Sodium/potassium-transporting ATPase subunit alpha (Atpalpha) from Drosophila melanogaster (Fruit fly).